Reading from the N-terminus, the 783-residue chain is BMP/retinoic acid-inducible neural-specific protein 2 (783 aa).

Positions 1–33 (MRWQCGTRFRGLRPAVAPWTALLALGLPGWVLA) are cleaved as a signal peptide. In terms of domain architecture, MACPF spans 85–281 (RYRIYREFAR…FVAAALSYIT (197 aa)). Residues Asn185, Asn354, Asn473, Asn579, Asn626, and Asn658 are each glycosylated (N-linked (GlcNAc...) asparagine).

It belongs to the BRINP family.

It is found in the secreted. Inhibits neuronal cell proliferation by negative regulation of the cell cycle transition. This Homo sapiens (Human) protein is BMP/retinoic acid-inducible neural-specific protein 2 (BRINP2).